A 708-amino-acid chain; its full sequence is F-box only protein 43 (708 aa).

The tract at residues 35–55 (MSQRHSGQAGTEAGNGADSPP) is disordered. A Phosphoserine modification is found at serine 76. Threonine 234 is subject to Phosphothreonine. The interval 320 to 426 (PSPEVRGSIS…ISEGQLSSDE (107 aa)) is disordered. Polar residues predominate over residues 327–337 (SISTPEDSGFN). Phosphoserine is present on serine 334. Basic residues predominate over residues 374 to 385 (KTRHLGRSRRLS). Positions 399-411 (EKQIVHPDSEKRA) are enriched in basic and acidic residues. The 58-residue stretch at 490-547 (MGIEKLDILTELKYRNLKHILAMVLESLTAESLCSVWKVSRNWREIVVQDKNANRRRK) folds into the F-box domain. A ZBR-type zinc finger spans residues 636–684 (ALKPCPRCQSPAKYQPYKKRGLCSRTACGFDFCVLCLCAYHGSEECSRG). The Zn(2+) site is built by cysteine 640, cysteine 643, cysteine 658, cysteine 663, cysteine 668, cysteine 671, histidine 676, and cysteine 681. Positions 682 to 708 (SRGAAKPRNRKDALPGSAQSKRNLKRL) are disordered.

As to quaternary structure, part of a SCF (SKP1-cullin-F-box) protein ligase complex. According to PubMed:34595750 interaction with SKP1 does not occur. Interacts with ANAPC2; the interaction is direct, ANAPC4, CDC16, CDC23; the interaction is direct, ANAPC10; the interaction is direct and CDC26, during spermatogenesis. May interact with CDC20. Phosphorylated on Ser-76, Thr-234 and Ser-334 in response to calcium, which is a prerequisite for ubiquitination and proteasomal degradation. In terms of processing, ubiquitinated in response to calcium, which promotes proteasomal degradation. Expressed in the testis.

Its pathway is protein modification; protein ubiquitination. In terms of biological role, required to establish and maintain the arrest of oocytes at the second meiotic metaphase until fertilization. Acts by inhibiting the anaphase-promoting complex/cyclosome (APC/C) ubiquitin ligase. Probably recognizes and binds to some phosphorylated proteins and promotes their ubiquitination and degradation. Plays a vital role in modulating the ubiquitilation of CCNB1 and CDK1 during gametogenesis. The chain is F-box only protein 43 (FBXO43) from Homo sapiens (Human).